A 275-amino-acid chain; its full sequence is Large ribosomal subunit protein uL2 (275 aa).

A disordered region spans residues Arg221–Arg275. Basic and acidic residues predominate over residues Asp229–Glu241.

This sequence belongs to the universal ribosomal protein uL2 family. As to quaternary structure, part of the 50S ribosomal subunit. Forms a bridge to the 30S subunit in the 70S ribosome.

Functionally, one of the primary rRNA binding proteins. Required for association of the 30S and 50S subunits to form the 70S ribosome, for tRNA binding and peptide bond formation. It has been suggested to have peptidyltransferase activity; this is somewhat controversial. Makes several contacts with the 16S rRNA in the 70S ribosome. The protein is Large ribosomal subunit protein uL2 of Dechloromonas aromatica (strain RCB).